The primary structure comprises 266 residues: Flavin-dependent thymidylate synthase (266 aa).

The 212-residue stretch at 11–222 (GFIRLVDYMG…PLACASFERH (212 aa)) folds into the ThyX domain. Residues Ser-57, 80 to 82 (RHR), and Glu-88 contribute to the FAD site. DUMP is bound by residues 77-80 (QWIR), 88-92 (EISGR), and Arg-161. The ThyX motif signature appears at 80-90 (RHRTARLNEIS). FAD is bound by residues 177–179 (DLH) and His-183. Arg-188 is a binding site for dUMP. The active-site Involved in ionization of N3 of dUMP, leading to its activation is the Arg-188.

Belongs to the thymidylate synthase ThyX family. As to quaternary structure, homotetramer. It depends on FAD as a cofactor.

The enzyme catalyses dUMP + (6R)-5,10-methylene-5,6,7,8-tetrahydrofolate + NADPH + H(+) = dTMP + (6S)-5,6,7,8-tetrahydrofolate + NADP(+). The protein operates within pyrimidine metabolism; dTTP biosynthesis. Functionally, catalyzes the reductive methylation of 2'-deoxyuridine-5'-monophosphate (dUMP) to 2'-deoxythymidine-5'-monophosphate (dTMP) while utilizing 5,10-methylenetetrahydrofolate (mTHF) as the methyl donor, and NADPH and FADH(2) as the reductant. The chain is Flavin-dependent thymidylate synthase from Treponema denticola (strain ATCC 35405 / DSM 14222 / CIP 103919 / JCM 8153 / KCTC 15104).